The following is a 708-amino-acid chain: Homeobox-leucine zipper protein HDG10 (708 aa).

Residues 1–24 (MDSSHNDSSSDEEGIDSNNRRHHS) are disordered. A DNA-binding region (homeobox) is located at residues 16-75 (DSNNRRHHSNHQVQRLEAFFHECPHPDDSQRRQLGNELNLKHKQIKFWFQNRRTQARIHN). Residues 119–141 (LCNLQKLRTKNVILKTEYERLSS) are a coiled coil. The tract at residues 162–188 (GPSTYGSTSNNRPASYGSSSNHLPQQS) is disordered. Polar residues predominate over residues 165-188 (TYGSTSNNRPASYGSSSNHLPQQS). The START domain maps to 218 to 456 (SQLEKNRMFE…LQRMCERLSL (239 aa)).

Belongs to the HD-ZIP homeobox family. Class IV subfamily. In terms of assembly, interacts with ANT, BBM and AIL1. In terms of tissue distribution, expressed in exclusively in anthers with highest levels in the tapetum and pollen grains.

The protein resides in the nucleus. In terms of biological role, probable transcription factor. This is Homeobox-leucine zipper protein HDG10 from Arabidopsis thaliana (Mouse-ear cress).